The primary structure comprises 503 residues: Probable cytosol aminopeptidase (503 aa).

Mn(2+)-binding residues include Lys-270 and Asp-275. Lys-282 is an active-site residue. 3 residues coordinate Mn(2+): Asp-293, Asp-352, and Glu-354. Residue Arg-356 is part of the active site.

The protein belongs to the peptidase M17 family. The cofactor is Mn(2+).

It is found in the cytoplasm. The catalysed reaction is Release of an N-terminal amino acid, Xaa-|-Yaa-, in which Xaa is preferably Leu, but may be other amino acids including Pro although not Arg or Lys, and Yaa may be Pro. Amino acid amides and methyl esters are also readily hydrolyzed, but rates on arylamides are exceedingly low.. The enzyme catalyses Release of an N-terminal amino acid, preferentially leucine, but not glutamic or aspartic acids.. Presumably involved in the processing and regular turnover of intracellular proteins. Catalyzes the removal of unsubstituted N-terminal amino acids from various peptides. This chain is Probable cytosol aminopeptidase, found in Salmonella arizonae (strain ATCC BAA-731 / CDC346-86 / RSK2980).